The sequence spans 380 residues: Alkanesulfonate monooxygenase (380 aa).

The protein belongs to the SsuD family. As to quaternary structure, homotetramer.

It carries out the reaction an alkanesulfonate + FMNH2 + O2 = an aldehyde + FMN + sulfite + H2O + 2 H(+). Functionally, catalyzes the desulfonation of aliphatic sulfonates. This is Alkanesulfonate monooxygenase from Pectobacterium carotovorum subsp. carotovorum (strain PC1).